Consider the following 166-residue polypeptide: 2-amino-4-hydroxy-6-hydroxymethyldihydropteridine pyrophosphokinase (166 aa).

This sequence belongs to the HPPK family.

The catalysed reaction is 6-hydroxymethyl-7,8-dihydropterin + ATP = (7,8-dihydropterin-6-yl)methyl diphosphate + AMP + H(+). It functions in the pathway cofactor biosynthesis; tetrahydrofolate biosynthesis; 2-amino-4-hydroxy-6-hydroxymethyl-7,8-dihydropteridine diphosphate from 7,8-dihydroneopterin triphosphate: step 4/4. Its function is as follows. Catalyzes the transfer of pyrophosphate from adenosine triphosphate (ATP) to 6-hydroxymethyl-7,8-dihydropterin, an enzymatic step in folate biosynthesis pathway. In Streptococcus pyogenes serotype M1, this protein is 2-amino-4-hydroxy-6-hydroxymethyldihydropteridine pyrophosphokinase (folK).